A 122-amino-acid chain; its full sequence is Ribosome-binding factor A (122 aa).

It belongs to the RbfA family. In terms of assembly, monomer. Binds 30S ribosomal subunits, but not 50S ribosomal subunits or 70S ribosomes.

It is found in the cytoplasm. In terms of biological role, one of several proteins that assist in the late maturation steps of the functional core of the 30S ribosomal subunit. Associates with free 30S ribosomal subunits (but not with 30S subunits that are part of 70S ribosomes or polysomes). Required for efficient processing of 16S rRNA. May interact with the 5'-terminal helix region of 16S rRNA. The polypeptide is Ribosome-binding factor A (Streptococcus agalactiae serotype III (strain NEM316)).